The following is a 203-amino-acid chain: Holliday junction branch migration complex subunit RuvA (203 aa).

The segment at 1–64 (MFAYFRGRLT…EDAFLLYGFS (64 aa)) is domain I. Positions 65–143 (SESERQLFRL…KMSPDGGKTI (79 aa)) are domain II. The flexible linker stretch occupies residues 144–150 (ASGSGGN). The tract at residues 151 to 203 (LALQIKDDALNALITLGFSKPAAQKAVTGILEGNPSLSVEEVVKSALVSIHNS) is domain III.

Belongs to the RuvA family. As to quaternary structure, homotetramer. Forms an RuvA(8)-RuvB(12)-Holliday junction (HJ) complex. HJ DNA is sandwiched between 2 RuvA tetramers; dsDNA enters through RuvA and exits via RuvB. An RuvB hexamer assembles on each DNA strand where it exits the tetramer. Each RuvB hexamer is contacted by two RuvA subunits (via domain III) on 2 adjacent RuvB subunits; this complex drives branch migration. In the full resolvosome a probable DNA-RuvA(4)-RuvB(12)-RuvC(2) complex forms which resolves the HJ.

The protein resides in the cytoplasm. Functionally, the RuvA-RuvB-RuvC complex processes Holliday junction (HJ) DNA during genetic recombination and DNA repair, while the RuvA-RuvB complex plays an important role in the rescue of blocked DNA replication forks via replication fork reversal (RFR). RuvA specifically binds to HJ cruciform DNA, conferring on it an open structure. The RuvB hexamer acts as an ATP-dependent pump, pulling dsDNA into and through the RuvAB complex. HJ branch migration allows RuvC to scan DNA until it finds its consensus sequence, where it cleaves and resolves the cruciform DNA. In Chlorobium limicola (strain DSM 245 / NBRC 103803 / 6330), this protein is Holliday junction branch migration complex subunit RuvA.